Reading from the N-terminus, the 505-residue chain is RNA-splicing ligase RtcB homolog (505 aa).

Mn(2+)-binding residues include D119, C122, H227, and H259. 226-230 (NHYAE) contributes to the GMP binding site. The residue at position 300 (S300) is a Phosphoserine. H353 serves as a coordination point for Mn(2+). Residues 353–354 (HN), 402–405 (GGTM), S409, and 428–431 (HGAG) contribute to the GMP site. Catalysis depends on H428, which acts as the GMP-histidine intermediate. K496 participates in a covalent cross-link: Glycyl lysine isopeptide (Lys-Gly) (interchain with G-Cter in SUMO2). K504 contacts GMP.

The protein belongs to the RtcB family. In terms of assembly, catalytic component of the tRNA-splicing ligase complex. The cofactor is Mn(2+).

It localises to the nucleus. The protein resides in the cytoplasm. The catalysed reaction is a 3'-end 3'-phospho-ribonucleotide-RNA + a 5'-end dephospho-ribonucleoside-RNA + GTP = a ribonucleotidyl-ribonucleotide-RNA + GMP + diphosphate. The enzyme catalyses a 3'-end 2',3'-cyclophospho-ribonucleotide-RNA + a 5'-end dephospho-ribonucleoside-RNA + GTP + H2O = a ribonucleotidyl-ribonucleotide-RNA + GMP + diphosphate + H(+). Functionally, catalytic subunit of the tRNA-splicing ligase complex that acts by directly joining spliced tRNA halves to mature-sized tRNAs by incorporating the precursor-derived splice junction phosphate into the mature tRNA as a canonical 3',5'-phosphodiester. May act as an RNA ligase with broad substrate specificity, and may function toward other RNAs. The sequence is that of RNA-splicing ligase RtcB homolog from Sus scrofa (Pig).